The chain runs to 386 residues: O-phospho-L-seryl-tRNA:Cys-tRNA synthase (386 aa).

Pyridoxal 5'-phosphate-binding positions include 89 to 90 (AR), asparagine 196, and 219 to 221 (SGH). At lysine 222 the chain carries N6-(pyridoxal phosphate)lysine.

The protein belongs to the SepCysS family. In terms of assembly, homodimer. Interacts with SepRS. It depends on pyridoxal 5'-phosphate as a cofactor.

The catalysed reaction is O-phospho-L-seryl-tRNA(Cys) + hydrogen sulfide + H(+) = L-cysteinyl-tRNA(Cys) + phosphate. Converts O-phospho-L-seryl-tRNA(Cys) (Sep-tRNA(Cys)) to L-cysteinyl-tRNA(Cys) (Cys-tRNA(Cys)). In Methanosarcina acetivorans (strain ATCC 35395 / DSM 2834 / JCM 12185 / C2A), this protein is O-phospho-L-seryl-tRNA:Cys-tRNA synthase.